A 61-amino-acid polypeptide reads, in one-letter code: MICHNQQSSQPPTIKTCPGETNCYKKRWRDHRGTIIERGCGCPSVKKGVGIYCCKTNKCNR.

Cystine bridges form between Cys-3–Cys-23, Cys-17–Cys-40, Cys-42–Cys-53, and Cys-54–Cys-59.

It belongs to the three-finger toxin family. Short-chain subfamily. Type I alpha-neurotoxin sub-subfamily. In terms of tissue distribution, expressed by the venom gland.

The protein localises to the secreted. Functionally, binds to muscle nicotinic acetylcholine receptor (nAChR) and inhibit acetylcholine from binding to the receptor, thereby impairing neuromuscular transmission. The sequence is that of Short neurotoxin 2 from Naja annulifera (Banded Egyptian cobra).